The chain runs to 245 residues: 1-(5-phosphoribosyl)-5-[(5-phosphoribosylamino)methylideneamino] imidazole-4-carboxamide isomerase (245 aa).

The Proton acceptor role is filled by aspartate 7. Catalysis depends on aspartate 129, which acts as the Proton donor.

It belongs to the HisA/HisF family.

The protein resides in the cytoplasm. It carries out the reaction 1-(5-phospho-beta-D-ribosyl)-5-[(5-phospho-beta-D-ribosylamino)methylideneamino]imidazole-4-carboxamide = 5-[(5-phospho-1-deoxy-D-ribulos-1-ylimino)methylamino]-1-(5-phospho-beta-D-ribosyl)imidazole-4-carboxamide. It participates in amino-acid biosynthesis; L-histidine biosynthesis; L-histidine from 5-phospho-alpha-D-ribose 1-diphosphate: step 4/9. The chain is 1-(5-phosphoribosyl)-5-[(5-phosphoribosylamino)methylideneamino] imidazole-4-carboxamide isomerase from Shewanella sp. (strain MR-7).